The chain runs to 629 residues: MERFLMQSSLSTSSLIYPHGSYDSSCNYCDAGEDKKGRICYGMVADQLTCEDYQLLIDQGWRRSGTFLYKPNNSDKKTCCPQYTIRLDTSSFKPSKDNKSTIKKFNNYILNNIIKEKDSSTTSTTKDIINTTQIKSNTKNNNNKTNDENIIKLNNDIIEIILNNEFINKFNEQDKKILKENLKIKINSNKMIKETGSYSLSFGIFNKYRSELNQHSITIDQIINFTILEFNKTINNSDYQFNLEKGQNNHINFKMINSSQILNDSTKTKTLNIQNNSNKNSTTTATTATTTTTTTNEPKHKFEISIHKPKCTDEVFSLYCKYQKIIHKEDDEKTKSGFKRFLVDSPLIPIIHPDESYDDYVYDGKDDDDDDDDKDEKEDDEDEDQEDDEDEDDGNNEDEKKITKENKEKEIKNHIYKIGKKSKTLKTRKFGEIKTPKPGYGSFHQYYRLDGKLVGVGVIDILPECLSSVYFFYDPDFNFLSLGKYSALNEIEWVQKVSQSIPQLKYYYMGYYIHSCQKMKYKANYQPSQLLCLETFKWVEFKKAISFLQPDKKYSRFYFDENENNNNEKLTYFEKEPELLERVKFRQKNFTFHFSDVSVRFQNLLKDQVIDYINHVGPELTKELIFYFK.

Disordered stretches follow at residues 274-298 (QNNS…TNEP) and 353-405 (PDES…ITKE). Residues 282 to 295 (TTTATTATTTTTTT) show a composition bias toward low complexity. A compositionally biased stretch (acidic residues) spans 356–396 (SYDDYVYDGKDDDDDDDDKDEKEDDEDEDQEDDEDEDDGNN).

It belongs to the R-transferase family.

It catalyses the reaction an N-terminal L-alpha-aminoacyl-[protein] + L-arginyl-tRNA(Arg) = an N-terminal L-arginyl-L-aminoacyl-[protein] + tRNA(Arg) + H(+). Functionally, involved in the post-translational conjugation of arginine to the N-terminal aspartate or glutamate of a protein. This arginylation is required for degradation of the protein via the ubiquitin pathway. Does not arginylate cysteine residues. This Dictyostelium discoideum (Social amoeba) protein is Arginyl-tRNA--protein transferase 1 (ate1).